Reading from the N-terminus, the 431-residue chain is Enolase (431 aa).

A (2R)-2-phosphoglycerate-binding site is contributed by Gln167. Glu209 functions as the Proton donor in the catalytic mechanism. Residues Asp246, Glu289, and Asp316 each contribute to the Mg(2+) site. (2R)-2-phosphoglycerate contacts are provided by Lys341, Arg370, Ser371, and Lys392. The active-site Proton acceptor is the Lys341.

This sequence belongs to the enolase family. Component of the RNA degradosome, a multiprotein complex involved in RNA processing and mRNA degradation. The cofactor is Mg(2+).

Its subcellular location is the cytoplasm. It localises to the secreted. It is found in the cell surface. It catalyses the reaction (2R)-2-phosphoglycerate = phosphoenolpyruvate + H2O. It functions in the pathway carbohydrate degradation; glycolysis; pyruvate from D-glyceraldehyde 3-phosphate: step 4/5. Its function is as follows. Catalyzes the reversible conversion of 2-phosphoglycerate (2-PG) into phosphoenolpyruvate (PEP). It is essential for the degradation of carbohydrates via glycolysis. This is Enolase from Shewanella putrefaciens (strain CN-32 / ATCC BAA-453).